The following is a 276-amino-acid chain: Probable endonuclease 4 (276 aa).

The Zn(2+) site is built by histidine 70, histidine 108, glutamate 144, aspartate 177, histidine 180, histidine 211, aspartate 224, histidine 226, and glutamate 256.

Belongs to the AP endonuclease 2 family. Zn(2+) serves as cofactor.

It carries out the reaction Endonucleolytic cleavage to 5'-phosphooligonucleotide end-products.. Functionally, endonuclease IV plays a role in DNA repair. It cleaves phosphodiester bonds at apurinic or apyrimidinic (AP) sites, generating a 3'-hydroxyl group and a 5'-terminal sugar phosphate. This is Probable endonuclease 4 from Metamycoplasma arthritidis (strain 158L3-1) (Mycoplasma arthritidis).